The sequence spans 97 residues: Large ribosomal subunit protein bL27 (97 aa).

Residues 1–12 (MLKMTLNNLQLF) constitute a propeptide that is removed on maturation. Residues 13 to 37 (AHKKGGGSTSNGRDSQAKRLGAKAA) are disordered.

The protein belongs to the bacterial ribosomal protein bL27 family. Post-translationally, the N-terminus is cleaved by ribosomal processing cysteine protease Prp.

This chain is Large ribosomal subunit protein bL27, found in Streptococcus pneumoniae serotype 2 (strain D39 / NCTC 7466).